Consider the following 338-residue polypeptide: Putative transport protein TM_1349 (338 aa).

The next 7 helical transmembrane spans lie at 20 to 40 (ILISFLVFKIFPDVFAVIVLM), 68 to 88 (ALLLFFFVMVYSLYMIIPPVF), 147 to 167 (VSVTTIIVFTLFGLGYTVFYI), 203 to 223 (VIFINAVIIGLSYWIVFEAFN), 239 to 259 (FIPIVGVVLEYIPVLLFSLTL), 263 to 283 (GVLLIALFAILIHAVAFVVFI), and 297 to 317 (IILSILFFGKLFGLFGSFVGV).

It belongs to the autoinducer-2 exporter (AI-2E) (TC 2.A.86) family.

The protein resides in the cell membrane. The chain is Putative transport protein TM_1349 from Thermotoga maritima (strain ATCC 43589 / DSM 3109 / JCM 10099 / NBRC 100826 / MSB8).